The primary structure comprises 409 residues: Phosphopentomutase (409 aa).

Positions 10, 302, 307, 343, 344, and 355 each coordinate Mn(2+).

It belongs to the phosphopentomutase family. Requires Mn(2+) as cofactor.

The protein resides in the cytoplasm. It carries out the reaction 2-deoxy-alpha-D-ribose 1-phosphate = 2-deoxy-D-ribose 5-phosphate. The catalysed reaction is alpha-D-ribose 1-phosphate = D-ribose 5-phosphate. It participates in carbohydrate degradation; 2-deoxy-D-ribose 1-phosphate degradation; D-glyceraldehyde 3-phosphate and acetaldehyde from 2-deoxy-alpha-D-ribose 1-phosphate: step 1/2. Isomerase that catalyzes the conversion of deoxy-ribose 1-phosphate (dRib-1-P) and ribose 1-phosphate (Rib-1-P) to deoxy-ribose 5-phosphate (dRib-5-P) and ribose 5-phosphate (Rib-5-P), respectively. The chain is Phosphopentomutase from Chelativorans sp. (strain BNC1).